Here is a 1165-residue protein sequence, read N- to C-terminus: DNA-directed RNA polymerase subunit beta (1165 aa).

Belongs to the RNA polymerase beta chain family. As to quaternary structure, the RNAP catalytic core consists of 2 alpha, 1 beta, 1 beta' and 1 omega subunit. When a sigma factor is associated with the core the holoenzyme is formed, which can initiate transcription.

It catalyses the reaction RNA(n) + a ribonucleoside 5'-triphosphate = RNA(n+1) + diphosphate. DNA-dependent RNA polymerase catalyzes the transcription of DNA into RNA using the four ribonucleoside triphosphates as substrates. This chain is DNA-directed RNA polymerase subunit beta, found in Corynebacterium glutamicum (strain R).